A 340-amino-acid polypeptide reads, in one-letter code: Glyceraldehyde-3-phosphate dehydrogenase (340 aa).

NAD(+)-binding positions include 11–12 and Gly111; that span reads SI. 140–142 serves as a coordination point for D-glyceraldehyde 3-phosphate; sequence SCN. Cys141 serves as the catalytic Nucleophile. Arg169 provides a ligand contact to NAD(+). 195 to 196 contacts D-glyceraldehyde 3-phosphate; sequence HG. Gln303 serves as a coordination point for NAD(+).

The protein belongs to the glyceraldehyde-3-phosphate dehydrogenase family. In terms of assembly, homotetramer.

It is found in the cytoplasm. The catalysed reaction is D-glyceraldehyde 3-phosphate + phosphate + NADP(+) = (2R)-3-phospho-glyceroyl phosphate + NADPH + H(+). It carries out the reaction D-glyceraldehyde 3-phosphate + phosphate + NAD(+) = (2R)-3-phospho-glyceroyl phosphate + NADH + H(+). The protein operates within carbohydrate degradation; glycolysis; pyruvate from D-glyceraldehyde 3-phosphate: step 1/5. This chain is Glyceraldehyde-3-phosphate dehydrogenase, found in Methanococcus maripaludis (strain DSM 14266 / JCM 13030 / NBRC 101832 / S2 / LL).